The sequence spans 348 residues: D-lactate dehydrogenase kk1H (348 aa).

Residues 158–159 (RI), Asp-178, 208–209 (CP), 235–237 (TSR), and Asp-261 each bind NAD(+). Arg-237 is an active-site residue. Residue Glu-266 is part of the active site. Catalysis depends on His-298, which acts as the Proton donor.

It belongs to the D-isomer specific 2-hydroxyacid dehydrogenase family.

It participates in secondary metabolite biosynthesis. In terms of biological role, D-lactate dehydrogenase; part of the gene cluster that mediates the biosynthesis of KK-1, a novel cyclic depsipeptide with 10 residues which is a promising active compound with high activity against many plant pathogens, especially Botrytis cinerea. Within the pathway, kk1H catalyzes in the synthesis of D-lactic acid from pyruvic acid, which is recognized by the A domain of the first kk1B module. The nonribosomal peptide synthetase (NRPS) kk1B catalyzes the elongation and cyclization of the decapeptide chain composed of 1 D-lactic acid residue (D-Lac), 1 pipecolic acid residue (Pip), 1 aspartic acid residue (Asp), 1 isoleucine residue (Ile), 1 glycine residue (Gly), 1 tyrosine residue (Tyr) and 4 valine residues (Val). The Asp, Ile and 3 Val residues are N-methylated by the 5 methyltransferase domains from the NRPS (found in modules 3, 5, 6, 7 and 9), whereas the Tyr residue is O-methylated by the cluster encoded O-methyltransferase kk1A. The thioesterase kk1J is likely to be involved in the corrective mechanism of peptide chain synthesis. The D-lactate dehydrogenase kk1H is involved in the synthesis of D-lactic acid from pyruvic acid, which is recognized by the A domain of the first kk1B module. The pyrroline-5-carboxylate reductase kk1I is involved in the synthesis of the L-pipecolic acid residue of KK-1 from delta-1-pyrroline-5-carboxylate (P5C), a metabolic intermediate of lysine. It still is unclear how kk1C and kk1D are involved in the production of KK-1. The sequence is that of D-lactate dehydrogenase kk1H from Curvularia clavata.